Consider the following 238-residue polypeptide: MGIDELYKKEFGIVAGVDEAGRGCLAGPVVAAAVVLEKEIEGINDSKQLSPAKRERLFDEIMGKAAVGIGIASPEEIDLHNIFNATKLAMNRALENLSVGPSFVLVDGKGIELRVPGTCLVKGDQKSKLIGAASIVAKVFRDRLMSEFHKMYPQFSFHKHKGYATKEHLNEIRKNGVLPIHRMSFEPVLELLTDDLLREFFEKGLISENRFEHIKNLLEAKKSVVFRKERTDHNLPLF.

The RNase H type-2 domain maps to 12–197 (GIVAGVDEAG…VLELLTDDLL (186 aa)). A divalent metal cation-binding residues include D18, E19, and D107.

The protein belongs to the RNase HII family. Requires Mn(2+) as cofactor. Mg(2+) is required as a cofactor.

It localises to the cytoplasm. It catalyses the reaction Endonucleolytic cleavage to 5'-phosphomonoester.. Functionally, endonuclease that specifically degrades the RNA of RNA-DNA hybrids. The sequence is that of Ribonuclease HII from Thermotoga petrophila (strain ATCC BAA-488 / DSM 13995 / JCM 10881 / RKU-1).